The following is a 399-amino-acid chain: Phosphoglycerate kinase (399 aa).

Substrate is bound by residues 21 to 23 (DFN), Arg36, 59 to 62 (HLGR), Arg120, and Arg158. Residues Lys209, Gly297, Glu328, and 355-358 (GGDS) contribute to the ATP site.

This sequence belongs to the phosphoglycerate kinase family. As to quaternary structure, monomer.

It localises to the cytoplasm. It catalyses the reaction (2R)-3-phosphoglycerate + ATP = (2R)-3-phospho-glyceroyl phosphate + ADP. Its pathway is carbohydrate degradation; glycolysis; pyruvate from D-glyceraldehyde 3-phosphate: step 2/5. The chain is Phosphoglycerate kinase from Streptococcus thermophilus (strain CNRZ 1066).